The sequence spans 122 residues: Small ribosomal subunit protein uS13 (122 aa).

A disordered region spans residues 97-122 (PVRGQRTKTNARTRKGPARTVAGKKK).

Belongs to the universal ribosomal protein uS13 family. As to quaternary structure, part of the 30S ribosomal subunit. Forms a loose heterodimer with protein S19. Forms two bridges to the 50S subunit in the 70S ribosome.

Its function is as follows. Located at the top of the head of the 30S subunit, it contacts several helices of the 16S rRNA. In the 70S ribosome it contacts the 23S rRNA (bridge B1a) and protein L5 of the 50S subunit (bridge B1b), connecting the 2 subunits; these bridges are implicated in subunit movement. Contacts the tRNAs in the A and P-sites. This Pelobacter propionicus (strain DSM 2379 / NBRC 103807 / OttBd1) protein is Small ribosomal subunit protein uS13.